The chain runs to 507 residues: MANSSVYADVIVVGAGPVGLFVACELALHDVSVIVLERDADSDNVWKKGLLGGRGMYKPALEAFYRRGLLADLLYDEKRVTYLEKTSGFQYAGHFGGRLLNANAVDFSRFKYHLPGPTFLPAKTTIADIECELSKRATECGVRIVRGVEISRVEDEGDEVTVWADNQSFKSNWLVACDGGKSTIRKAAGFQFTGTDSELTCYIAVCDVDKPELLGKGMKPTDAGMYIVSGPRHLYVMDFDTTFDRSQTVTKEHLERVLQRVSGTSVKIEALELVSTFTDRCKQTTQYRKGRILLAGDSAHIHSPLGAQGLTTGIADAFNLGWKLASTVKGYASADLLDTYQRERQPEGAWTLDWSRSQVVIMRPDPAGKAISRLVTEYMATDDGTTFFVNKIWGISRRYDLVGAQAHPLVGCSVPDFQFEDGSYLGSKLHEGKFMTVDFSGSKLLEEATDLVQPWVGYLSCSVKDRLGMNALLLRPDGVVAWVAEDEVKVDSWKAALSQWIVLPGEA.

The protein belongs to the PheA/TfdB FAD monooxygenase family. It depends on FAD as a cofactor.

It participates in pigment biosynthesis. Its function is as follows. Monoogygenase; part of the ergochrome gene cluster responsible for the typical purple-black color of the ergot sclerotia. The ergochrome gene cluster produces several ergot pigments including the yellow ergochrome secalonic acid and its derivatives, as well as the red anthraquinones endocrocin and clavorubin. The pathway begins with the synthesis of atrochrysone thioester by the polyketide synthase (PKS) CPUR_05437. The atrochrysone carboxyl ACP thioesterase CPUR_05436 then breaks the thioester bond and releases the atrochrysone carboxylic acid from CPUR_05437. The atrochrysone carboxylic acid is then converted to atrochrysone which is further transformed into emodin anthrone. The next step is performed by the anthrone oxygenase CPUR_05434 that catalyzes the oxidation of emodinanthrone to emodin. Emodin is further modified to yield monodictyphenone via several steps involving CPUR_05427, CPUR_05428, CPUR_05429 and CPUR_05430. The short chain dehydrogenase/reductase CPUR_05418 then catalyzes the C-5 ketoreduction to give the xanthone skeleton of the monomeric units. Ergochromes formation requires further dimerization steps of different xanthone units, probably catalyzed by the cytochrome P450 monooxygenase CPUR_05419. CPUR_05425, CPUR_05426 and CPUR_05431 are unique to Claviceps, thus it is likely that they are involved in further modification of xanthone units or in their dimerization. The yellow ergochromes and the red anthraquinone pigments endocrocin and clavorubin are products from the same PKS derived precursors and the latter are likely shunt products in the pathway of xanthone biosynthesis. It is proposed that atrochrysone carboxylic acid released from the PKS CPUR_05437 can also be converted to endocrocin anthrone which is further oxidized into endocrocin by CPUR_05435. Endocrocin could be then modified to clavorubin, possibly by CPUR_05423 and CPUR_05431. Clavorubin is the principal anthraquinone metabolite produced by the cluster with a much higher yield compared to endocrocin. This Claviceps purpurea (strain 20.1) (Ergot fungus) protein is Monoogygenase CPUR_05431.